We begin with the raw amino-acid sequence, 283 residues long: Probable 3-deoxy-manno-octulosonic acid transferase (283 aa).

The protein resides in the cytoplasm. It carries out the reaction an alpha-Kdo-(2-&gt;4)-alpha-Kdo-(2-&gt;6)-lipid IVA + CMP-3-deoxy-beta-D-manno-octulosonate = an alpha-Kdo-(2-&gt;4)-alpha-Kdo-(2-&gt;4)-alpha-Kdo-(2-&gt;6)-lipid IVA + CMP + H(+). It catalyses the reaction alpha-Kdo-(2-&gt;4)-alpha-Kdo-(2-&gt;6)-lipid IVA (E. coli) + CMP-3-deoxy-beta-D-manno-octulosonate = alpha-Kdo-(2-&gt;4)-alpha-Kdo-(2-&gt;4)-alpha-Kdo-(2-&gt;6)-lipid IVA + CMP + H(+). It participates in bacterial outer membrane biogenesis; LPS core biosynthesis. Its pathway is bacterial outer membrane biogenesis; LOS core biosynthesis. In terms of biological role, involved in the biosynthesis of the core oligosaccharide region of lipopolysaccharide (LPS). Required for the addition of 3-deoxy-D-manno-oct-2-ulosonic acid III (KdoIII) to the KdoII residue of the inner lipopolysaccharide core. May also play a role in a lipooligosaccharide (LOS) biosynthesis pathway. This is Probable 3-deoxy-manno-octulosonic acid transferase from Escherichia coli (strain K12).